The sequence spans 172 residues: Bifunctional protein PyrR (172 aa).

Substrate-binding positions include 36–37 (TG), R77, 94–102 (DDVLMSGRT), and V151. Positions 90–102 (LVLVDDVLMSGRT) match the PRPP-binding motif.

This sequence belongs to the purine/pyrimidine phosphoribosyltransferase family. PyrR subfamily.

It catalyses the reaction UMP + diphosphate = 5-phospho-alpha-D-ribose 1-diphosphate + uracil. Functionally, regulates the transcription of the pyrimidine nucleotide (pyr) operon in response to exogenous pyrimidines. Its function is as follows. Also displays a weak uracil phosphoribosyltransferase activity which is not physiologically significant. The sequence is that of Bifunctional protein PyrR from Pseudomonas putida (Arthrobacter siderocapsulatus).